A 284-amino-acid polypeptide reads, in one-letter code: L-ribulose-5-phosphate 3-epimerase UlaE (284 aa).

The protein belongs to the L-ribulose-5-phosphate 3-epimerase family.

It catalyses the reaction L-ribulose 5-phosphate = L-xylulose 5-phosphate. It participates in cofactor degradation; L-ascorbate degradation; D-xylulose 5-phosphate from L-ascorbate: step 3/4. Its function is as follows. Catalyzes the isomerization of L-xylulose-5-phosphate to L-ribulose-5-phosphate. Is involved in the anaerobic L-ascorbate utilization. In Escherichia coli O139:H28 (strain E24377A / ETEC), this protein is L-ribulose-5-phosphate 3-epimerase UlaE.